Reading from the N-terminus, the 233-residue chain is MSACQTPLIVALDFPTREAALKLADQLDPALCRVKVGKELFTSSASGIVETLCDKGFEVFLDLKFHDIPNTTAMAVKAAAEMGVWMVNVHCSGGLRMMVACREELAKRSGPQPLLIGVTVLTSMEREDLAGIGLDVDPQEQVLRLAALAEKAGMDGLVCSALEAPALKAAHPSLQLVTPGIRPAGSAQDDQRRILTPRQALDAGSDYLVIGRPISQAADPAQALAAVVAEIRG.

Residues D13, K35, 62-71 (DLKFHDIPNT), T122, R182, Q191, G211, and R212 contribute to the substrate site. The active-site Proton donor is the K64.

The protein belongs to the OMP decarboxylase family. Type 1 subfamily. Homodimer.

The catalysed reaction is orotidine 5'-phosphate + H(+) = UMP + CO2. It participates in pyrimidine metabolism; UMP biosynthesis via de novo pathway; UMP from orotate: step 2/2. Its function is as follows. Catalyzes the decarboxylation of orotidine 5'-monophosphate (OMP) to uridine 5'-monophosphate (UMP). The polypeptide is Orotidine 5'-phosphate decarboxylase (Pseudomonas putida (strain ATCC 700007 / DSM 6899 / JCM 31910 / BCRC 17059 / LMG 24140 / F1)).